The chain runs to 868 residues: V-set and immunoglobulin domain-containing protein 10-like (868 aa).

The N-terminal stretch at 1–27 (MGLSWALLPFLLLAFRAELLALQPALG) is a signal peptide. Low complexity predominate over residues 26–52 (LGSQPPSASSSHSMGSSRDFVSNVSSS). The interval 26–82 (LGSQPPSASSSHSMGSSRDFVSNVSSSQHPQPPGSEASAGIPDSNRFPQGLNSSHVP) is disordered. Over 28–763 (SQPPSASSSH…QAGSDLSPGA (736 aa)) the chain is Extracellular. 3 N-linked (GlcNAc...) asparagine glycosylation sites follow: asparagine 48, asparagine 77, and asparagine 88. A compositionally biased stretch (polar residues) spans 71-80 (RFPQGLNSSH). 2 disordered regions span residues 96–154 (LSPD…SGSK) and 323–342 (WSRD…EPPR). Polar residues-rich tracts occupy residues 99–108 (DVTSSETPPS) and 133–143 (PASQISVQTPD). Ig-like C2-type domains are found at residues 289 to 381 (PQLS…ADVS) and 389 to 474 (PVIR…SVFN). Residues cysteine 311 and cysteine 365 are joined by a disulfide bond. Asparagine 410 carries an N-linked (GlcNAc...) asparagine glycan. The cysteines at positions 415 and 458 are disulfide-linked. Asparagine 474, asparagine 628, and asparagine 637 each carry an N-linked (GlcNAc...) asparagine glycan. The chain crosses the membrane as a helical span at residues 764 to 784 (IAGIVLGSLLGLALLAGLLIL). Residues 785–868 (CICCLRRYPG…PWTVRAATQV (84 aa)) lie on the Cytoplasmic side of the membrane.

It localises to the membrane. In Mus musculus (Mouse), this protein is V-set and immunoglobulin domain-containing protein 10-like (Vsig10l).